Consider the following 297-residue polypeptide: MIPLRVRVPASTANVGPGFDSVGIALSLYLEVSVKEEADKWQVIHSFDDSIPKDDKNLIVSTACKVCPSLSPHIIEVTSNIPLTRGLGSSASAIVAGIELANQLGNLYLTTDQKVQIATNFEGHPDNVAASILGGTVIGALDGKNVSVVRIESKELGVISLIPNEELNTDESRSVLPEMFPFHEAVKASAISNVLVAALCQKKWEVVGEMMERDHFHEPYRLELVPLLPSIRKCAKEFGAYGTALSGAGPSIFILTPYEKRKEIADQLARVFAAMKVCELEIDHKGITVNKEEHIGL.

82–92 lines the ATP pocket; sequence PLTRGLGSSAS.

This sequence belongs to the GHMP kinase family. Homoserine kinase subfamily.

It localises to the cytoplasm. The enzyme catalyses L-homoserine + ATP = O-phospho-L-homoserine + ADP + H(+). It functions in the pathway amino-acid biosynthesis; L-threonine biosynthesis; L-threonine from L-aspartate: step 4/5. Functionally, catalyzes the ATP-dependent phosphorylation of L-homoserine to L-homoserine phosphate. The polypeptide is Homoserine kinase (Bacillus mycoides (strain KBAB4) (Bacillus weihenstephanensis)).